We begin with the raw amino-acid sequence, 147 residues long: Ubiquitin-conjugating enzyme E2 5A (147 aa).

Residues 1–15 (MASKRIQKELKDLQK) show a composition bias toward basic and acidic residues. Positions 1-24 (MASKRIQKELKDLQKDPPTSCSAG) are disordered. A UBC core domain is found at 1-147 (MASKRIQKEL…ARTWTQRYAM (147 aa)). Residue Cys85 is the Glycyl thioester intermediate of the active site.

It belongs to the ubiquitin-conjugating enzyme family.

It catalyses the reaction S-ubiquitinyl-[E1 ubiquitin-activating enzyme]-L-cysteine + [E2 ubiquitin-conjugating enzyme]-L-cysteine = [E1 ubiquitin-activating enzyme]-L-cysteine + S-ubiquitinyl-[E2 ubiquitin-conjugating enzyme]-L-cysteine.. The protein operates within protein modification; protein ubiquitination. In terms of biological role, E2 conjugating enzyme that associates with the E3 ubiquitin-protein ligase EL5 to mediate ubiquitination of target proteins. The sequence is that of Ubiquitin-conjugating enzyme E2 5A (UBC5A) from Oryza sativa subsp. japonica (Rice).